A 484-amino-acid polypeptide reads, in one-letter code: Probable UDP-N-acetylglucosamine pyrophosphorylase (484 aa).

Residues 107–110 (LAGG) carry the Substrate binding motif. UTP-binding positions include 107-110 (LAGG), K121, Q200, and G226. N227 is a substrate binding site. Residue D255 coordinates UTP. Residues 304–305 (EY) carry the Substrate binding motif. K377 serves as a coordination point for UTP. A substrate-binding site is contributed by K407.

It belongs to the UDPGP type 1 family.

It is found in the cytoplasm. It carries out the reaction N-acetyl-alpha-D-glucosamine 1-phosphate + UTP + H(+) = UDP-N-acetyl-alpha-D-glucosamine + diphosphate. The protein operates within nucleotide-sugar biosynthesis; UDP-N-acetyl-alpha-D-glucosamine biosynthesis; UDP-N-acetyl-alpha-D-glucosamine from N-acetyl-alpha-D-glucosamine 1-phosphate: step 1/1. This Caenorhabditis elegans protein is Probable UDP-N-acetylglucosamine pyrophosphorylase.